The primary structure comprises 736 residues: MGSPLRFDGRVVLVTGAGAGLGRAYALAFAERGALVVVNDLGGDFKGVGKGSLAADKVVEEIRRRGGKAVANYDSVEEGEKVVKTALDAFGRIDVVVNNAGILRDRSFARISDEDWDIIHRVHLRGSFQVTRAAWEHMKKQKYGRIIMTSSASGIYGNFGQANYSAAKLGLLGLANSLAIEGRKSNIHCNTIAPNAGSRMTQTVMPEDLVEALKPEYVAPLVLWLCHESCEENGGLFEVGAGWIGKLRWERTLGAIVRQKNHPMTPEAVKANWKKICDFENASKPQSIQESTGSIIEVLSKIDSEGGVSANHTSRATSTATSGFAGAIGQKLPPFSYAYTELEAIMYALGVGASIKDPKDLKFIYEGSSDFSCLPTFGVIIGQKSMMGGGLAEIPGLSINFAKVLHGEQYLELYKPLPRAGKLKCEAVVADVLDKGSGVVIIMDVYSYSEKELICHNQFSLFLVGSGGFGGKRTSDKVKVAVAIPNRPPDAVLTDTTSLNQAALYRLSGDWNPLHIDPNFASLAGFDKPILHGLCTFGFSARRVLQQFADNDVSRFKAIKARFAKPVYPGQTLQTEMWKEGNRIHFQTKVQETGDIVISNAYVDLAPTSGTSAKTPSEGGKLQSTFVFEEIGRRLKDIGPEVVKKVNAVFEWHITKGGNIGAKWTIDLKSGSGKVYQGPAKGAADTTIILSDEDFMEVVLGKLDPQKAFFSGRLKARGNIMLSQKLQMILKDYAKL.

Residues 1–305 (MGSPLRFDGR…IEVLSKIDSE (305 aa)) form a (3R)-hydroxyacyl-CoA dehydrogenase region. Residues 13–37 (LVTG…ALVV), leucine 21, and aspartate 40 contribute to the NAD(+) site. Position 46 is an N6-acetyllysine; alternate (lysine 46). Lysine 46 is modified (N6-succinyllysine; alternate). At serine 52 the chain carries Phosphoserine. An N6-succinyllysine mark is found at lysine 57 and lysine 68. An NAD(+)-binding site is contributed by 75-76 (SV). Lysine 84 bears the N6-succinyllysine mark. Asparagine 99 is an NAD(+) binding site. Serine 151 provides a ligand contact to substrate. The active-site Proton acceptor is the tyrosine 164. NAD(+)-binding positions include 164–168 (YSAAK) and 196–199 (AGSR). Position 265 is a phosphothreonine (threonine 265). The residue at position 275 (lysine 275) is an N6-succinyllysine. A phosphoserine mark is found at serine 304 and serine 309. The tract at residues 322–622 (SGFAGAIGQK…AKTPSEGGKL (301 aa)) is enoyl-CoA hydratase 2. Position 356 is an N6-succinyllysine (lysine 356). Residue 406-407 (HG) coordinates (3R)-3-hydroxydecanoyl-CoA. The residue at position 424 (lysine 424) is an N6-succinyllysine. Residues lysine 435, 510 to 515 (DWNPLH), glycine 533, and phenylalanine 563 contribute to the (3R)-3-hydroxydecanoyl-CoA site. The region spanning 484–600 (IPNRPPDAVL…QETGDIVISN (117 aa)) is the MaoC-like domain. Lysine 565 is subject to N6-acetyllysine. N6-succinyllysine occurs at positions 579 and 663. An SCP2 domain is found at 624–736 (STFVFEEIGR…QMILKDYAKL (113 aa)). Lysine 669 bears the N6-acetyllysine mark. Position 706 (glutamine 706) interacts with substrate. Residue lysine 707 is modified to N6-acetyllysine. Glutamine 724 serves as a coordination point for substrate. An N6-succinyllysine modification is found at lysine 725. The short motif at 734-736 (AKL) is the Microbody targeting signal element.

This sequence belongs to the short-chain dehydrogenases/reductases (SDR) family. Homodimer. Present in many tissues with highest concentrations in liver, heart, prostate and testis.

It localises to the peroxisome. It carries out the reaction a (3R)-3-hydroxyacyl-CoA + NAD(+) = a 3-oxoacyl-CoA + NADH + H(+). The catalysed reaction is a (3R)-3-hydroxyacyl-CoA = a (2E)-enoyl-CoA + H2O. The enzyme catalyses (24R,25R)-3alpha,7alpha,12alpha,24-tetrahydroxy-5beta-cholestan-26-oyl-CoA = (24E)-3alpha,7alpha,12alpha-trihydroxy-5beta-cholest-24-en-26-oyl-CoA + H2O. It catalyses the reaction (2E)-octenoyl-CoA + H2O = (3R)-hydroxyoctanoyl-CoA. It carries out the reaction (3R)-hydroxyoctanoyl-CoA + NAD(+) = 3-oxooctanoyl-CoA + NADH + H(+). The catalysed reaction is (3R)-hydroxyhexadecanoyl-CoA + NAD(+) = 3-oxohexadecanoyl-CoA + NADH + H(+). The enzyme catalyses (2E)-hexadecenedioyl-CoA + H2O = (3R)-hydroxyhexadecanedioyl-CoA. It catalyses the reaction (3R)-hydroxyhexadecanedioyl-CoA + NAD(+) = 3-oxohexadecanedioyl-CoA + NADH + H(+). It carries out the reaction (3R)-hydroxyhexadecanoyl-CoA = (2E)-hexadecenoyl-CoA + H2O. The catalysed reaction is (3R)-3-hydroxydecanoyl-CoA = (2E)-decenoyl-CoA + H2O. The enzyme catalyses (3R)-3-hydroxydecanoyl-CoA + NAD(+) = 3-oxodecanoyl-CoA + NADH + H(+). It catalyses the reaction (24R,25R)-3alpha,7alpha,12alpha,24-tetrahydroxy-5beta-cholestan-26-oyl-CoA + NAD(+) = 3alpha,7alpha,12alpha-trihydroxy-24-oxo-5beta-cholestan-26-oyl-CoA + NADH + H(+). Its pathway is lipid metabolism; fatty acid beta-oxidation. Functionally, bifunctional enzyme acting on the peroxisomal fatty acid beta-oxidation pathway. Catalyzes two of the four reactions in fatty acid degradation: hydration of 2-enoyl-CoA (trans-2-enoyl-CoA) to produce (3R)-3-hydroxyacyl-CoA, and dehydrogenation of (3R)-3-hydroxyacyl-CoA to produce 3-ketoacyl-CoA (3-oxoacyl-CoA), which is further metabolized by SCPx. Can use straight-chain and branched-chain fatty acids, as well as bile acid intermediates as substrates. The polypeptide is Peroxisomal multifunctional enzyme type 2 (Homo sapiens (Human)).